The chain runs to 227 residues: MAYPFQLGLQDATSPIMEELLHFHDHTLMIVFLISSLVLYIISLMLTTKLTHTSTMDAQEVETVWTILPAIILVLIALPSLRILYMMDEINNPSLTVKTMGHQWYWSYEYTDYEDLNFDSYMIPTQELKPGELRLLEVDNRVVLPMEMTVRMLISSEDVLHSWAVPSLGLKTDAIPGRLNQTTLMAMRPGLYYGQCSEICGSNHSFMPIVLEMVPLSYFETWSALMV.

Topologically, residues 1–14 are mitochondrial intermembrane; that stretch reads MAYPFQLGLQDATS. Residues 15–45 form a helical membrane-spanning segment; that stretch reads PIMEELLHFHDHTLMIVFLISSLVLYIISLM. Topologically, residues 46-59 are mitochondrial matrix; the sequence is LTTKLTHTSTMDAQ. The helical transmembrane segment at 60-87 threads the bilayer; it reads EVETVWTILPAIILVLIALPSLRILYMM. The Mitochondrial intermembrane portion of the chain corresponds to 88 to 227; the sequence is DEINNPSLTV…YFETWSALMV (140 aa). The Cu cation site is built by His-161, Cys-196, Glu-198, Cys-200, His-204, and Met-207. Residue Glu-198 coordinates Mg(2+). Tyr-218 is modified (phosphotyrosine).

The protein belongs to the cytochrome c oxidase subunit 2 family. Component of the cytochrome c oxidase (complex IV, CIV), a multisubunit enzyme composed of 14 subunits. The complex is composed of a catalytic core of 3 subunits MT-CO1, MT-CO2 and MT-CO3, encoded in the mitochondrial DNA, and 11 supernumerary subunits COX4I, COX5A, COX5B, COX6A, COX6B, COX6C, COX7A, COX7B, COX7C, COX8 and NDUFA4, which are encoded in the nuclear genome. The complex exists as a monomer or a dimer and forms supercomplexes (SCs) in the inner mitochondrial membrane with NADH-ubiquinone oxidoreductase (complex I, CI) and ubiquinol-cytochrome c oxidoreductase (cytochrome b-c1 complex, complex III, CIII), resulting in different assemblies (supercomplex SCI(1)III(2)IV(1) and megacomplex MCI(2)III(2)IV(2)). Found in a complex with TMEM177, COA6, COX18, COX20, SCO1 and SCO2. Interacts with TMEM177 in a COX20-dependent manner. Interacts with COX20. Interacts with COX16. It depends on Cu cation as a cofactor.

The protein resides in the mitochondrion inner membrane. The catalysed reaction is 4 Fe(II)-[cytochrome c] + O2 + 8 H(+)(in) = 4 Fe(III)-[cytochrome c] + 2 H2O + 4 H(+)(out). In terms of biological role, component of the cytochrome c oxidase, the last enzyme in the mitochondrial electron transport chain which drives oxidative phosphorylation. The respiratory chain contains 3 multisubunit complexes succinate dehydrogenase (complex II, CII), ubiquinol-cytochrome c oxidoreductase (cytochrome b-c1 complex, complex III, CIII) and cytochrome c oxidase (complex IV, CIV), that cooperate to transfer electrons derived from NADH and succinate to molecular oxygen, creating an electrochemical gradient over the inner membrane that drives transmembrane transport and the ATP synthase. Cytochrome c oxidase is the component of the respiratory chain that catalyzes the reduction of oxygen to water. Electrons originating from reduced cytochrome c in the intermembrane space (IMS) are transferred via the dinuclear copper A center (CU(A)) of subunit 2 and heme A of subunit 1 to the active site in subunit 1, a binuclear center (BNC) formed by heme A3 and copper B (CU(B)). The BNC reduces molecular oxygen to 2 water molecules using 4 electrons from cytochrome c in the IMS and 4 protons from the mitochondrial matrix. In Cerdocyon thous (Crab-eating fox), this protein is Cytochrome c oxidase subunit 2 (MT-CO2).